Consider the following 205-residue polypeptide: Protein TK0174 (205 aa).

Residues 7 to 201 form the AMMECR1 domain; that stretch reads EWGEFLVRLA…EEYPRGPVRR (195 aa).

This Thermococcus kodakarensis (strain ATCC BAA-918 / JCM 12380 / KOD1) (Pyrococcus kodakaraensis (strain KOD1)) protein is Protein TK0174.